Reading from the N-terminus, the 668-residue chain is Transketolase 2 (668 aa).

H26 serves as a coordination point for substrate. Residues H66 and 114–116 (GPL) each bind thiamine diphosphate. Residue D155 participates in Mg(2+) binding. Residues G156 and N185 each contribute to the thiamine diphosphate site. N185 and I187 together coordinate Mg(2+). Substrate-binding residues include H261, R358, and S385. Position 261 (H261) interacts with thiamine diphosphate. The active-site Proton donor is the E413. F439 is a thiamine diphosphate binding site. 3 residues coordinate substrate: H463, D471, and R522.

Belongs to the transketolase family. As to quaternary structure, homodimer. The cofactor is Mg(2+). Ca(2+) is required as a cofactor. It depends on Mn(2+) as a cofactor. Requires Co(2+) as cofactor. Thiamine diphosphate serves as cofactor.

It carries out the reaction D-sedoheptulose 7-phosphate + D-glyceraldehyde 3-phosphate = aldehydo-D-ribose 5-phosphate + D-xylulose 5-phosphate. Its function is as follows. Catalyzes the transfer of a two-carbon ketol group from a ketose donor to an aldose acceptor, via a covalent intermediate with the cofactor thiamine pyrophosphate. The sequence is that of Transketolase 2 (tktB) from Pasteurella multocida (strain Pm70).